Consider the following 22-residue polypeptide: Large ribosomal subunit protein bL32 (22 aa).

Residues 1-22 (CVQQNKKSRSARDMXXSXDALE) are disordered. Residues 13-22 (DMXXSXDALE) are compositionally biased toward low complexity.

Belongs to the bacterial ribosomal protein bL32 family.

This chain is Large ribosomal subunit protein bL32 (rpmF), found in Ectopseudomonas mendocina (Pseudomonas mendocina).